Here is a 507-residue protein sequence, read N- to C-terminus: Glycerol kinase 1 (507 aa).

ADP is bound at residue T12. ATP is bound by residues T12, T13, and S14. T12 contributes to the sn-glycerol 3-phosphate binding site. R16 provides a ligand contact to ADP. Sn-glycerol 3-phosphate contacts are provided by R82, E83, Y134, and D249. Residues R82, E83, Y134, D249, and Q250 each coordinate glycerol. Positions 271 and 315 each coordinate ADP. T271, G315, Q319, and G416 together coordinate ATP. Residues G416 and N420 each contribute to the ADP site.

Belongs to the FGGY kinase family.

It catalyses the reaction glycerol + ATP = sn-glycerol 3-phosphate + ADP + H(+). The protein operates within polyol metabolism; glycerol degradation via glycerol kinase pathway; sn-glycerol 3-phosphate from glycerol: step 1/1. Its activity is regulated as follows. Inhibited by fructose 1,6-bisphosphate (FBP). Its function is as follows. Key enzyme in the regulation of glycerol uptake and metabolism. Catalyzes the phosphorylation of glycerol to yield sn-glycerol 3-phosphate. In Streptomyces coelicolor (strain ATCC BAA-471 / A3(2) / M145), this protein is Glycerol kinase 1.